A 142-amino-acid chain; its full sequence is Large-conductance mechanosensitive channel (142 aa).

3 helical membrane passes run 14–34 (VMDLAVGVIIGAAFSKIVDSV), 38–58 (LVMPVVGAITGGGFDFSNYFL), and 82–102 (GNFITVLINFLILAWIIFLLI).

Belongs to the MscL family. In terms of assembly, homopentamer.

The protein localises to the cell inner membrane. Functionally, channel that opens in response to stretch forces in the membrane lipid bilayer. May participate in the regulation of osmotic pressure changes within the cell. This Rhizobium meliloti (strain 1021) (Ensifer meliloti) protein is Large-conductance mechanosensitive channel.